A 131-amino-acid polypeptide reads, in one-letter code: Fumarate reductase subunit C (131 aa).

3 helical membrane-spanning segments follow: residues 30–50, 61–81, and 110–130; these read EGTA…LFAL, IGFL…AAAL, and IKGL…VALF.

Belongs to the FrdC family. Part of an enzyme complex containing four subunits: a flavoprotein (FrdA), an iron-sulfur protein (FrdB), and two hydrophobic anchor proteins (FrdC and FrdD).

Its subcellular location is the cell inner membrane. Functionally, two distinct, membrane-bound, FAD-containing enzymes are responsible for the catalysis of fumarate and succinate interconversion; fumarate reductase is used in anaerobic growth, and succinate dehydrogenase is used in aerobic growth. Anchors the catalytic components of the fumarate reductase complex to the cell inner membrane, binds quinones. The sequence is that of Fumarate reductase subunit C from Klebsiella pneumoniae (strain 342).